Here is a 389-residue protein sequence, read N- to C-terminus: Gibberellin 20 oxidase 2 (389 aa).

Residues 1 to 17 (MVAEHPTPPQPHQPPPM) show a composition bias toward pro residues. The disordered stretch occupies residues 1–23 (MVAEHPTPPQPHQPPPMDSTAGS). Residues 224 to 324 (DSSSIMRCNY…RRSLAFFLCP (101 aa)) enclose the Fe2OG dioxygenase domain. Positions 249, 251, and 305 each coordinate Fe cation. Arg315 is an active-site residue.

It belongs to the iron/ascorbate-dependent oxidoreductase family. GA20OX subfamily. Fe cation serves as cofactor. The cofactor is L-ascorbate.

It catalyses the reaction gibberellin A12 + 2 2-oxoglutarate + 3 O2 + H(+) = gibberellin A9 + 2 succinate + 3 CO2 + 2 H2O. It carries out the reaction gibberellin A53 + 2 2-oxoglutarate + 3 O2 + H(+) = gibberellin A20 + 2 succinate + 3 CO2 + 2 H2O. In terms of biological role, key oxidase enzyme in the biosynthesis of gibberellin that catalyzes the conversion of GA53 to GA20 via a three-step oxidation at C-20 of the GA skeleton. This chain is Gibberellin 20 oxidase 2 (20ox2), found in Oryza sativa subsp. indica (Rice).